The chain runs to 146 residues: HTH-type transcriptional regulator FarR (146 aa).

The HTH marR-type domain maps to 7–139 (HASINIGLIQ…LKDLLAELAK (133 aa)). A DNA-binding region (H-T-H motif) is located at residues 53–76 (FQDLANQACILRPSLTGILTRLEK).

With respect to regulation, repressor activity requires the presence of the Integration Host Factor (IHF), which binds to sequences located between FarR binding sites A and C. IHF binding to the promoter region stabilizes the binding of FarR to its binding sites A and C and as a consequence, enhances repression of the farAB operon. In terms of biological role, negatively controls expression of the farAB operon by binding directly to the farAB promoter region. Binds to three sites (sites A, B and C) within the DNA sequence upstream of farA. Also represses its own expression. The chain is HTH-type transcriptional regulator FarR from Neisseria gonorrhoeae.